The primary structure comprises 389 residues: Major outer membrane porin (389 aa).

It belongs to the chlamydial porin (CP) (TC 1.B.2) family. Part of a disulfide cross-linked outer membrane complex (COMC) composed of the major outer membrane porin (MOMP), the small cysteine-rich protein (OmcA) and the large cysteine-rich periplasmic protein (OmcB).

Its subcellular location is the cell outer membrane. In elementary bodies (EBs, the infectious stage, which is able to survive outside the host cell) provides the structural integrity of the outer envelope through disulfide cross-links with the small cysteine-rich protein and the large cysteine-rich periplasmic protein. It has been described in publications as the Sarkosyl-insoluble COMC (Chlamydia outer membrane complex), and serves as the functional equivalent of peptidoglycan. In terms of biological role, permits diffusion of specific solutes through the outer membrane. The sequence is that of Major outer membrane porin (ompA) from Chlamydia pneumoniae (Chlamydophila pneumoniae).